The following is a 254-amino-acid chain: Metallo-beta-lactamase type 2 (254 aa).

An N-terminal signal peptide occupies residues 1-27; sequence MMKGWMKCGLAGAVVLMASFWGGSVRA. Residue D99 coordinates Zn(2+). Substrate is bound by residues T135 and H174. C193 contributes to the Zn(2+) binding site. Residues K196 and N201 each coordinate substrate. H231 provides a ligand contact to Zn(2+).

This sequence belongs to the metallo-beta-lactamase superfamily. Class-B beta-lactamase family. As to quaternary structure, monomer. The cofactor is Zn(2+).

It localises to the periplasm. It carries out the reaction a beta-lactam + H2O = a substituted beta-amino acid. With respect to regulation, competitively inhibited by mercaptophosphonate and pyridine carboxylate derivatives. Also inhibited by the binding of a second zinc ion and by chelating agents such as EDTA. In terms of biological role, confers resistance to the different beta-lactams antibiotics (penicillin, cephalosporin and carbapenem) via the hydrolysis of the beta-lactam ring. It is able to hydrolyze penicillin and imipenem, but is much less active against cephalothin, cefotaxime, meropenem and ceftazidime. The sequence is that of Metallo-beta-lactamase type 2 from Aeromonas hydrophila.